The primary structure comprises 506 residues: uncharacterized protein (506 aa).

282–289 (GIQGTGKS) is an ATP binding site.

It belongs to the AAA ATPase family. Highly divergent.

It localises to the plastid. The protein localises to the chloroplast. This is an uncharacterized protein from Guillardia theta (Cryptophyte).